The sequence spans 396 residues: Activity-regulated cytoskeleton-associated protein (396 aa).

Residues 54–78 are a coiled coil; the sequence is SKQVERELKGLHRSVGKLENNLDGY. The segment at 89-100 is interaction with SH3GL1 or SH3GL3; sequence KSIKACLCRCQE. The interval 177–207 is disordered; the sequence is PPAAGELPEQESVEAQQYQSWGPGEDGQPSP. Positions 195-214 are interaction with DNM2; that stretch reads QSWGPGEDGQPSPGVDTQIF. Phosphoserine; by CaMK2 is present on Ser260. Residues Lys268 and Lys269 each participate in a glycyl lysine isopeptide (Lys-Gly) (interchain with G-Cter in ubiquitin) cross-link. Thr278 is subject to Phosphothreonine. The tract at residues 356 to 396 is disordered; it reads QDGLEQAAEPSGTPLPTEDETEALTPALTSESVASDRTQPE. Over residues 382–396 the composition is skewed to polar residues; the sequence is ALTSESVASDRTQPE.

The protein belongs to the ARC/ARG3.1 family. As to quaternary structure, homooligomer; homooligomerizes into virion-like capsids. Interacts with SH3GL1/endophilin-2, SH3GL3/endophilin-3 and DNM2/DYN2. Interacts with CAMK2B (in the kinase inactive state); leading to target ARC to inactive synapses. Interacts with PSEN1. Interacts with GRIN2A and GRIN2B; inhibiting homooligomerization. Ubiquitinated by UBE3A, leading to its degradation by the proteasome, thereby promoting AMPA receptors (AMPARs) expression at synapses. Ubiquitinated by RNF216 at Lys-268 and Lys-269 limiting ARC protein levels induced by synaptic activity and thus regulating ARC-dependent forms of synaptic plasticity. In terms of processing, palmitoylation anchors the protein into the membrane by allowing direct insertion into the hydrophobic core of the lipid bilayer. Post-translationally, phosphorylation at Ser-260 by CaMK2 prevents homooligomerization into virion-like capsids by disrupting an interaction surface essential for high-order oligomerization. Phosphorylation by CaMK2 inhibits synaptic activity. In terms of tissue distribution, expressed in brain and testis. In primary visual cortex, detected in all cortical layers with the exception of layer 5: present at highest level in layers 2/3 and 4, the predominant sites of ocular dominance plasticity (at protein level). Also expressed in skin-migratory dendritic cells.

It localises to the extracellular vesicle membrane. It is found in the postsynaptic cell membrane. The protein localises to the synapse. The protein resides in the postsynaptic density. Its subcellular location is the early endosome membrane. It localises to the cell projection. It is found in the dendrite. The protein localises to the cytoplasm. The protein resides in the cytoskeleton. Its subcellular location is the cell cortex. It localises to the dendritic spine. It is found in the cytoplasmic vesicle. The protein localises to the secretory vesicle. The protein resides in the acrosome. Its subcellular location is the clathrin-coated vesicle membrane. Functionally, master regulator of synaptic plasticity that self-assembles into virion-like capsids that encapsulate RNAs and mediate intercellular RNA transfer in the nervous system. ARC protein is released from neurons in extracellular vesicles that mediate the transfer of ARC mRNA into new target cells, where ARC mRNA can undergo activity-dependent translation. ARC capsids are endocytosed and are able to transfer ARC mRNA into the cytoplasm of neurons. Acts as a key regulator of synaptic plasticity: required for protein synthesis-dependent forms of long-term potentiation (LTP) and depression (LTD) and for the formation of long-term memory. Regulates synaptic plasticity by promoting endocytosis of AMPA receptors (AMPARs) in response to synaptic activity: this endocytic pathway maintains levels of surface AMPARs in response to chronic changes in neuronal activity through synaptic scaling, thereby contributing to neuronal homeostasis. Acts as a postsynaptic mediator of activity-dependent synapse elimination in the developing cerebellum by mediating elimination of surplus climbing fiber synapses. Accumulates at weaker synapses, probably to prevent their undesired enhancement. This suggests that ARC-containing virion-like capsids may be required to eliminate synaptic material. Required to transduce experience into long-lasting changes in visual cortex plasticity and for long-term memory. Involved in postsynaptic trafficking and processing of amyloid-beta A4 (APP) via interaction with PSEN1. In addition to its role in synapses, also involved in the regulation of the immune system: specifically expressed in skin-migratory dendritic cells and regulates fast dendritic cell migration, thereby regulating T-cell activation. The polypeptide is Activity-regulated cytoskeleton-associated protein (Mus musculus (Mouse)).